We begin with the raw amino-acid sequence, 976 residues long: Leucine--tRNA ligase (976 aa).

Residues 1 to 23 show a composition bias toward low complexity; that stretch reads MTESPTTTPGSTSGAPSGVPSGV. A disordered region spans residues 1–34; sequence MTESPTTTPGSTSGAPSGVPSGVNDAESDAPRHR. Positions 86–97 match the 'HIGH' region motif; sequence PYPSGEGLHVGH. The 'KMSKS' region motif lies at 745 to 749; the sequence is KIGKS. Residue lysine 748 participates in ATP binding.

The protein belongs to the class-I aminoacyl-tRNA synthetase family.

It localises to the cytoplasm. It catalyses the reaction tRNA(Leu) + L-leucine + ATP = L-leucyl-tRNA(Leu) + AMP + diphosphate. In Mycobacterium ulcerans (strain Agy99), this protein is Leucine--tRNA ligase.